The chain runs to 285 residues: Prephenate dehydratase (285 aa).

The region spanning 2 to 183 (KVGYLGPAAT…NHTRFVILSP (182 aa)) is the Prephenate dehydratase domain. Residues 204–281 (MVMLPQDDQS…CKVRLLGAYQ (78 aa)) form the ACT domain.

It catalyses the reaction prephenate + H(+) = 3-phenylpyruvate + CO2 + H2O. It participates in amino-acid biosynthesis; L-phenylalanine biosynthesis; phenylpyruvate from prephenate: step 1/1. The chain is Prephenate dehydratase (pheA) from Bacillus subtilis (strain 168).